A 1150-amino-acid polypeptide reads, in one-letter code: PAN2-PAN3 deadenylation complex catalytic subunit PAN2 (1150 aa).

4 WD repeats span residues 26–67 (AHHS…MEFQ), 114–156 (GHVN…ITKE), 158–194 (PAPNHYFLMKKSKYICAASRNGCVDILDPITLKVINT), and 290–328 (GHTHLALFDVSPSGQAMVFTDTEGYIHVWGPTSKAVSFV). Positions 326–471 (SFVDQGLPVE…IRTDIESLKS (146 aa)) are linker. The USP domain occupies 472–862 (VVPNMYHLFE…TPLVVMFQLK (391 aa)). An Exonuclease domain is found at 911–1079 (AIDAEFVLAK…HDSIEDANTA (169 aa)). The a divalent metal cation site is built by Asp-913, Glu-915, Asp-1022, and Asp-1075. Residues 1118–1150 (GQSAQRTETPPMVDDAQPGALLPYQPPELLQGS) are disordered.

It belongs to the peptidase C19 family. PAN2 subfamily. In terms of assembly, forms a heterotrimer with an asymmetric homodimer of the regulatory subunit PAN3 to form the poly(A)-nuclease (PAN) deadenylation complex. A divalent metal cation serves as cofactor.

Its subcellular location is the cytoplasm. The enzyme catalyses Exonucleolytic cleavage of poly(A) to 5'-AMP.. Positively regulated by the regulatory subunit PAN3. Catalytic subunit of the poly(A)-nuclease (PAN) deadenylation complex, one of two cytoplasmic mRNA deadenylases involved in mRNA turnover. PAN specifically shortens poly(A) tails of RNA and the activity is stimulated by poly(A)-binding protein PAB1. PAN deadenylation is followed by rapid degradation of the shortened mRNA tails by the CCR4-NOT complex. Deadenylated mRNAs are then degraded by two alternative mechanisms, namely exosome-mediated 3'-5' exonucleolytic degradation, or deadenylation-dependent mRNA decaping and subsequent 5'-3' exonucleolytic degradation by XRN1. May also be involved in post-transcriptional maturation of mRNA poly(A) tails. The protein is PAN2-PAN3 deadenylation complex catalytic subunit PAN2 of Pyricularia oryzae (strain 70-15 / ATCC MYA-4617 / FGSC 8958) (Rice blast fungus).